We begin with the raw amino-acid sequence, 1508 residues long: MIIIGVKRNINNSNNSNSNNNSNKKKDKIMSHNNNNTITGKNTNEIMNNNNNSNNNNNNNNNNNNNNNNNNNEEVKTEPIQQILKRLNSKNKIEVGATPNDIPTSIPSVKNLGKKYDSKAETHLLNQKVLSSPSKEVNSLKKSTNGTNTIPSSSIPSSPPSSPPSSSSLSSDRTSQDIPKSVNGLTASIVAKFSKNIDNNTTNNNSNNNNNSSLSTPIQSPRDSLETNPIKDEESEESEESEESKEEEEELKMGIKTTKTTSETIESSYSTSQLLKNDLIQEKGDDNNNIQEPQQPKYPTQTSFITDKSKRLSTPPINGTSISIGNNNNNNNNYINGNSGINTIPRNFQSHRVAGDWKDRKLNTLFTQGTVGGNGQNGTVRKNLIGTRELSTSSGILQCKDDSSSKDQDFEFNNSAGSSGNSSASNSNRNSIAFSSSNHFSSESSQSAPTLPIYNPSQYTSPSTPQSPSPSPSPPLISSKSIYINKPPPPHFNQQTNFSVSPTKSPSNEKQQQEDEDVKHLVRAFTNRKLNVHHAERKSKISVQDAEWIVKKFFHDTDRQSKFVLSENRTKDLNQPSSQFSPSTSPSTNSIPTNLLLSNKRLSTSLPNINTNINNSSNNTSSSSSSSSTTSSPSPLTTSSSTSVLPPPLSSSSSSQLTESLKTRIEENNNNNNNKNINNNNNNNNNNGRNSIHDSQEMTELEDPHSSPSYRHLEEVGKKKYVSAEPSRRPGIKTPLFLNVPTLAMPTQFHQIPPERVSSNLFSVSVEENSYPDNPLLFNQQIINRVANDKDLSYLFFPVLKSSTKITSSTLNNIIPINKLNNQIHNNNNNNVIISNNTGNNNNNNNSSKNNNTVKGNKKQQNKSSSSSQNNSPPSDFSLSVSPSPCSSLTPSPSPSPSSPLIESSMFTKDLSPPPPAAAAIVLQQPVATTNNKSTDKDSRKSLWSSMKSSKPPISTSQPSTIQDTISTSPPSTSTSPTSNSPPTSISPPPPSITTGSSPPSTAGTSPPNDNGNNNNNSNKELTISIPITNVNVHESNIVVASTPRSGRDLATIVAEEFKDRTDIVFCTQHLSMNRIKVRSASLDAMIDLLTNHRLSQPDLVESFLLTYKTFTSPLAVLTKLIERYEETDNINNNNNNNNDDLIISTRTTATITNEDEDNSNSNSNSNKTNKNSSRTIKLGVLSIIKCWVDRHHYDFERNKALLSAIVAFLEGPVIDDGMEKVSNIILKIIDRKANEAEARRTGTALVMHTSTSHCKFPPSIPPSLSKPDQIPTLQNFDDLEIARQLTLIEHEAYSMVKPNECINLAFSKSDKEIRAPNIINIIKRSNLLPLWVATEIVQEERLTKRANIIKKFISIADQCKNLNNFNAVMEILSGLNLTPVFRLKKTWETLPRKYLATFRHLNSLMAPKFNFKVYRDVLHTKNLPCLPFLGVYLTDLTFLEEGSFDQAENGLINIVKRTQIANIIQEIQQYQQLSYSFAPVPIIKDFLLQIGGLQERALYKQSKIIEP.

8 disordered regions span residues 1–73, 128–182, 197–272, 396–517, 565–593, 606–727, 831–1021, and 1153–1172; these read MIII…NNNE, KVLS…PKSV, IDNN…YSTS, ILQC…EDED, LSEN…SIPT, LPNI…AEPS, NVII…SNKE, and TNED…TNKN. Composition is skewed to low complexity over residues 9 to 22 and 33 to 72; these read NINN…NNNS and NNNN…NNNN. 2 stretches are compositionally biased toward polar residues: residues 128-150 and 172-182; these read KVLS…TNTI and DRTSQDIPKSV. The segment covering 199 to 216 has biased composition (low complexity); sequence NNTTNNNSNNNNNSSLST. Basic and acidic residues predominate over residues 223 to 232; that stretch reads DSLETNPIKD. Residues 233-250 are compositionally biased toward acidic residues; the sequence is EESEESEESEESKEEEEE. A compositionally biased stretch (low complexity) spans 255-272; it reads IKTTKTTSETIESSYSTS. A compositionally biased stretch (basic and acidic residues) spans 399-409; it reads CKDDSSSKDQD. Positions 413 to 447 are enriched in low complexity; it reads NNSAGSSGNSSASNSNRNSIAFSSSNHFSSESSQS. Residues 465–475 show a composition bias toward pro residues; sequence PQSPSPSPSPP. Positions 492-510 are enriched in polar residues; that stretch reads FNQQTNFSVSPTKSPSNEK. Low complexity-rich tracts occupy residues 574-593, 606-660, 668-687, 831-855, 862-891, 942-984, 993-1019, and 1160-1172; these read NQPS…SIPT, LPNI…LTES, NNNN…NNNN, NVII…NTVK, NKSS…SLTP, SLWS…SPPT, ITTG…NNSN, and SNSN…TNKN. A coiled-coil region spans residues 659-686; sequence ESLKTRIEENNNNNNNKNINNNNNNNNN. An N-terminal Ras-GEF domain is found at 1074-1234; that stretch reads NRIKVRSASL…IILKIIDRKA (161 aa). Positions 1278–1508 constitute a Ras-GEF domain; sequence DDLEIARQLT…LYKQSKIIEP (231 aa).

In terms of biological role, promotes the exchange of Ras-bound GDP by GTP. In Dictyostelium discoideum (Social amoeba), this protein is Ras guanine nucleotide exchange factor Y (gefY).